Reading from the N-terminus, the 138-residue chain is Ribosome-binding factor A (138 aa).

The protein belongs to the RbfA family. As to quaternary structure, monomer. Binds 30S ribosomal subunits, but not 50S ribosomal subunits or 70S ribosomes.

It localises to the cytoplasm. One of several proteins that assist in the late maturation steps of the functional core of the 30S ribosomal subunit. Associates with free 30S ribosomal subunits (but not with 30S subunits that are part of 70S ribosomes or polysomes). Required for efficient processing of 16S rRNA. May interact with the 5'-terminal helix region of 16S rRNA. In Bradyrhizobium sp. (strain BTAi1 / ATCC BAA-1182), this protein is Ribosome-binding factor A.